The sequence spans 786 residues: Phenylalanine--tRNA ligase beta subunit (786 aa).

The tRNA-binding domain maps to 39 to 150 (LRAPDRVVVG…GELKLGKPLH (112 aa)). The B5 domain occupies 397-474 (YKPATITVDL…RLLGIDTILA (78 aa)). 4 residues coordinate Mg(2+): D452, D458, E461, and E462. The 94-residue stretch at 693–786 (SKFPKLQRDL…LNHRFGAKLR (94 aa)) folds into the FDX-ACB domain.

It belongs to the phenylalanyl-tRNA synthetase beta subunit family. Type 1 subfamily. Tetramer of two alpha and two beta subunits. Mg(2+) serves as cofactor.

Its subcellular location is the cytoplasm. The enzyme catalyses tRNA(Phe) + L-phenylalanine + ATP = L-phenylalanyl-tRNA(Phe) + AMP + diphosphate + H(+). This chain is Phenylalanine--tRNA ligase beta subunit, found in Wolinella succinogenes (strain ATCC 29543 / DSM 1740 / CCUG 13145 / JCM 31913 / LMG 7466 / NCTC 11488 / FDC 602W) (Vibrio succinogenes).